We begin with the raw amino-acid sequence, 1241 residues long: High-affinity potassium transport protein (1241 aa).

The next 2 membrane-spanning stretches (helical) occupy residues 49 to 70 (NFIA…ILLY) and 78 to 98 (IDAL…TVDV). Residue asparagine 100 is glycosylated (N-linked (GlcNAc...) asparagine). A helical transmembrane segment spans residues 107–127 (IILYIICCISTPIAVHSCLAF). 3 disordered regions span residues 162–241 (TART…SLDD), 253–316 (KYHG…TPED), and 329–570 (EGTA…QLQQ). A compositionally biased stretch (polar residues) spans 164-177 (RTMTKSKTGGTQRV). 2 stretches are compositionally biased toward basic and acidic residues: residues 181–191 (GKSDKRDDFQE) and 199–214 (VNRD…HNSR). The segment covering 215–238 (DSNSNANTNSSNNNSINHNGSSGS) has biased composition (low complexity). N-linked (GlcNAc...) asparagine glycosylation is found at asparagine 223, asparagine 227, asparagine 233, asparagine 257, asparagine 274, asparagine 353, and asparagine 364. Polar residues-rich tracts occupy residues 268–280 (NTAT…QKLK) and 345–365 (TDGT…TMNE). Basic and acidic residues predominate over residues 366–375 (SKIRIQDKGA). Residues 380–411 (DQDSVLHSSNSSACTSDEDSLPTNFGGTTPSL) show a composition bias toward polar residues. 2 N-linked (GlcNAc...) asparagine glycosylation sites follow: asparagine 389 and asparagine 442. Composition is skewed to basic residues over residues 446-455 (PPRKASKSKR) and 482-497 (HLPK…KRRL). Over residues 498–509 (STGSIDKNSSSD) the composition is skewed to polar residues. N-linked (GlcNAc...) asparagine glycans are attached at residues asparagine 505 and asparagine 538. Positions 520–545 (NDDDDGNEGDNMEEYFADNESGDEDD) are enriched in acidic residues. The segment covering 561–570 (KQQQQHQLQQ) has biased composition (low complexity). N-linked (GlcNAc...) asparagine glycosylation is found at asparagine 584, asparagine 660, asparagine 681, asparagine 691, and asparagine 741. Residues 677–714 (NSHRNGSEDVSSDSNETTYPLNGNNDHSQNDANGYPTY) are disordered. Residues 684-708 (EDVSSDSNETTYPLNGNNDHSQNDA) are compositionally biased toward polar residues. A run of 5 helical transmembrane segments spans residues 784-806 (ILVV…WINL), 819-840 (VSPT…GLTL), 844-864 (SMMS…FIII), 868-888 (GFPI…PDLS), and 904-924 (CFTL…LVGL). Residue asparagine 925 is glycosylated (N-linked (GlcNAc...) asparagine). 2 helical membrane-spanning segments follow: residues 929-949 (WILF…SKGY) and 977-997 (SIQV…AISI). A disordered region spans residues 1011 to 1073 (YGEMGGKPED…ENENPNEEST (63 aa)). Acidic residues predominate over residues 1021 to 1041 (TDTEEDGDCDDEDDDNEEEES). Basic residues predominate over residues 1050-1062 (GKSKKETKKKKKR). Helical transmembrane passes span 1084-1104 (QLSF…ICER) and 1117-1137 (VFTI…SLGY). An N-linked (GlcNAc...) asparagine glycan is attached at asparagine 1141. The tract at residues 1222 to 1241 (DELKHKRSLSRSSKRSTKTN) is disordered. Over residues 1226–1241 (HKRSLSRSSKRSTKTN) the composition is skewed to basic residues.

Belongs to the TrkH potassium transport family.

Its subcellular location is the membrane. Its function is as follows. This protein is required for high-affinity potassium transport. This Saccharomyces uvarum (Yeast) protein is High-affinity potassium transport protein (TRK1).